Here is a 136-residue protein sequence, read N- to C-terminus: Large ribosomal subunit protein uL16 (136 aa).

This sequence belongs to the universal ribosomal protein uL16 family. Part of the 50S ribosomal subunit.

Its function is as follows. Binds 23S rRNA and is also seen to make contacts with the A and possibly P site tRNAs. This is Large ribosomal subunit protein uL16 from Proteus mirabilis (strain HI4320).